Reading from the N-terminus, the 887-residue chain is Alanine--tRNA ligase (887 aa).

Zn(2+) is bound by residues histidine 579, histidine 583, cysteine 681, and histidine 685.

Belongs to the class-II aminoacyl-tRNA synthetase family. The cofactor is Zn(2+).

It localises to the cytoplasm. The enzyme catalyses tRNA(Ala) + L-alanine + ATP = L-alanyl-tRNA(Ala) + AMP + diphosphate. In terms of biological role, catalyzes the attachment of alanine to tRNA(Ala) in a two-step reaction: alanine is first activated by ATP to form Ala-AMP and then transferred to the acceptor end of tRNA(Ala). Also edits incorrectly charged Ser-tRNA(Ala) and Gly-tRNA(Ala) via its editing domain. In Flavobacterium psychrophilum (strain ATCC 49511 / DSM 21280 / CIP 103535 / JIP02/86), this protein is Alanine--tRNA ligase.